A 463-amino-acid polypeptide reads, in one-letter code: Glycerol-3-phosphate acyltransferase, chloroplastic (463 aa).

Residues 1–91 (MSIFFSPSSP…AATQPSAGSD (91 aa)) constitute a chloroplast transit peptide. Disordered regions lie at residues 18–37 (NANPRVSPSSSPSSAFTPPL) and 65–95 (AETVHGNKWPSPSSSSSAATQPSAGSDHGHS). 2 stretches are compositionally biased toward low complexity: residues 24-37 (SPSSSPSSAFTPPL) and 74-90 (PSPSSSSSAATQPSAGS). Residues 229–234 (HQTEAD) carry the HXXXXD motif motif.

The protein belongs to the GPAT/DAPAT family.

Its subcellular location is the plastid. It localises to the chloroplast stroma. The enzyme catalyses sn-glycerol 3-phosphate + an acyl-CoA = a 1-acyl-sn-glycero-3-phosphate + CoA. The protein operates within phospholipid metabolism; CDP-diacylglycerol biosynthesis; CDP-diacylglycerol from sn-glycerol 3-phosphate: step 1/3. Esterifies acyl-group from acyl-ACP to the sn-1 position of glycerol-3-phosphate. The enzyme from chilling-resistant plants discriminates against non-fluid palmitic acid and selects oleic acid whereas the enzyme from sensitive plants accepts both fatty acids. The polypeptide is Glycerol-3-phosphate acyltransferase, chloroplastic (Carthamus tinctorius (Safflower)).